Consider the following 197-residue polypeptide: uncharacterized protein (197 aa).

6 helical membrane-spanning segments follow: residues 5–23 (LNLL…GLRF), 27–46 (ISFA…MLRF), 55–77 (VIAG…LAYT), 87–109 (LSLL…VIRI), 116–138 (VFAF…LPTG), and 153–174 (FVEF…CLVF).

Its subcellular location is the cell membrane. This is an uncharacterized protein from Archaeoglobus fulgidus (strain ATCC 49558 / DSM 4304 / JCM 9628 / NBRC 100126 / VC-16).